The following is a 220-amino-acid chain: 7-cyano-7-deazaguanine synthase (220 aa).

10 to 20 contributes to the ATP binding site; that stretch reads FSGGQDSTTCL. Residues Cys186, Cys195, Cys198, and Cys201 each coordinate Zn(2+).

This sequence belongs to the QueC family. In terms of assembly, homodimer. Zn(2+) is required as a cofactor.

The enzyme catalyses 7-carboxy-7-deazaguanine + NH4(+) + ATP = 7-cyano-7-deazaguanine + ADP + phosphate + H2O + H(+). Its pathway is purine metabolism; 7-cyano-7-deazaguanine biosynthesis. In terms of biological role, catalyzes the ATP-dependent conversion of 7-carboxy-7-deazaguanine (CDG) to 7-cyano-7-deazaguanine (preQ(0)). This chain is 7-cyano-7-deazaguanine synthase, found in Bacillus cereus (strain G9842).